The chain runs to 432 residues: Type I restriction enzyme MjaIX specificity subunit (432 aa).

Belongs to the type-I restriction system S methylase family. In terms of assembly, the type I restriction/modification system is composed of three polypeptides R, M and S.

The specificity (S) subunit of a type I restriction enzyme; this subunit dictates DNA sequence specificity. The M and S subunits together form a methyltransferase (MTase) that methylates A-3 on the top and A-2 on the bottom strand of the sequence 5'-CCAN(5)GTR-3'. In the presence of the R subunit the complex can also act as an endonuclease, binding to the same target sequence but cutting the DNA some distance from this site. Whether the DNA is cut or modified depends on the methylation state of the target sequence. When the target site is unmodified, the DNA is cut. When the target site is hemimethylated, the complex acts as a maintenance MTase modifying the DNA so that both strands become methylated. After locating a non-methylated recognition site, the enzyme complex serves as a molecular motor that translocates DNA in an ATP-dependent manner until a collision occurs that triggers cleavage. The polypeptide is Type I restriction enzyme MjaIX specificity subunit (hsdS) (Methanocaldococcus jannaschii (strain ATCC 43067 / DSM 2661 / JAL-1 / JCM 10045 / NBRC 100440) (Methanococcus jannaschii)).